The primary structure comprises 85 residues: RNA-binding protein Hfq (85 aa).

A Sm domain is found at 10 to 69; it reads DPFLNILRKEHVPVSIYLVNGIKLQGQIESFDQYVVLLKNTVTQMVYKHAISTVVPARPV.

Belongs to the Hfq family. In terms of assembly, homohexamer.

Functionally, RNA chaperone that binds small regulatory RNA (sRNAs) and mRNAs to facilitate mRNA translational regulation in response to envelope stress, environmental stress and changes in metabolite concentrations. Also binds with high specificity to tRNAs. This chain is RNA-binding protein Hfq, found in Laribacter hongkongensis (strain HLHK9).